Here is a 270-residue protein sequence, read N- to C-terminus: 25S rRNA adenine-N(1) methyltransferase (270 aa).

Residues G111 and D131 each coordinate S-adenosyl-L-methionine.

The protein belongs to the BMT2 family.

It is found in the nucleus. The protein localises to the nucleolus. Functionally, S-adenosyl-L-methionine-dependent methyltransferase that specifically methylates the N(1) position of an adenine present in helix 65 in 25S rRNA. This is 25S rRNA adenine-N(1) methyltransferase from Schizosaccharomyces pombe (strain 972 / ATCC 24843) (Fission yeast).